Reading from the N-terminus, the 253-residue chain is PAXIP1-associated glutamate-rich protein 1 (253 aa).

Disordered stretches follow at residues 1-109 (MSLV…MPPP) and 128-253 (QAEI…QRKY). Basic and acidic residues predominate over residues 51–62 (EGGREEAEHEGS). The interval 116 to 160 (YELLAAHGTLELQAEILPRRPPTPEAQSEEERSDEEPEAKEEEEE) is sufficient for interaction with NCOA1. At Thr-138 the chain carries Phosphothreonine. A compositionally biased stretch (acidic residues) spans 142-159 (QSEEERSDEEPEAKEEEE). Ser-143 and Ser-148 each carry phosphoserine. A sufficient for interaction with ESR1 region spans residues 161 to 253 (KPHMPTEFDF…GSLFPRQRKY (93 aa)). Residues 195–223 (QKREARLDKVLSDMKRHKKLEEQILRTGR) show a composition bias toward basic and acidic residues. Ser-237 carries the phosphoserine modification.

In terms of assembly, component of the KMT2 family MLL2/MLL3 complex, at least composed of the histone methyltransferases KMT2D and/or KMT2C, the common complex subunits ASH2L, RBBP5, WDR5 and DPY30, and the complex type-specific subunits PAXIP1/PTIP, PAGR1, NCOA6 and KDM6A; PAXIP1 is required for the association with the MLL2/MLL3 complex. Forms a constitutive complex with PAXIP1/PTIP independently of the MLL2/MLL3 complex. Interacts with NCOA1, ESR1, NR3C1, AR.

The protein localises to the nucleus. Its function is as follows. Its association with the histone methyltransferase MLL2/MLL3 complex is suggesting a role in epigenetic transcriptional activation. However, in association with PAXIP1/PTIP is proposed to function at least in part independently of the MLL2/MLL3 complex. Proposed to be recruited by PAXIP1 to sites of DNA damage where the PAGR1:PAXIP1 complex is required for cell survival in response to DNA damage independently of the MLL2/MLL3 complex. However, its function in DNA damage has been questioned. During immunoglobulin class switching in activated B-cells is involved in transcription regulation of downstream switch regions at the immunoglobulin heavy-chain (Igh) locus independently of the MLL2/MLL3 complex. Involved in both estrogen receptor-regulated gene transcription and estrogen-stimulated G1/S cell-cycle transition. Acts as a transcriptional cofactor for nuclear hormone receptors. Inhibits the induction properties of several steroid receptors such as NR3C1, AR and PPARG; the mechanism of inhibition appears to be gene-dependent. This is PAXIP1-associated glutamate-rich protein 1 (PAGR1) from Bos taurus (Bovine).